We begin with the raw amino-acid sequence, 509 residues long: Sperm-associated antigen 6 (509 aa).

ARM repeat units follow at residues 31 to 70, 73 to 112, 115 to 154, 157 to 196, 199 to 238, 241 to 280, 325 to 365, and 368 to 409; these read PQNIETLQNAGVMSLLRTLLLDVVPTIQQTAALALGRLAN, DDLAEAVVKCDILPQLVYSLAEQNRFYKKAAAFVLRAVGK, PQLAQAIVDCGALDTLVICLEDFDPGVKEAAAWALRYIAR, AELSQAVVDAGAVPLLVLCIQEPEIALKRIAASALSDIAK, PELAQTVVDAGAVAHLAQMILNPDAKLKHQILSALSQVSK, VDLAEMVVEAEIFPVVLTCLKDKDEYVKKNASTLIREIAK, ENLA…QIGR, and PEHA…NILQ.

Interacts with SPAG16 and SPAG17. As to expression, highly expressed in testis.

The protein resides in the cytoplasm. It localises to the cytoskeleton. It is found in the cell projection. Its subcellular location is the cilium. The protein localises to the flagellum. The protein resides in the cilium axoneme. Functionally, important for structural integrity of the central apparatus in the sperm tail and for flagellar motility. This chain is Sperm-associated antigen 6 (SPAG6), found in Homo sapiens (Human).